The chain runs to 492 residues: uncharacterized protein (492 aa).

Residue 266 to 273 (GIQGTGKS) coordinates ATP.

The protein belongs to the AAA ATPase family. Highly divergent.

Its subcellular location is the plastid. The protein resides in the chloroplast. This is an uncharacterized protein from Pyropia yezoensis (Susabi-nori).